Here is a 670-residue protein sequence, read N- to C-terminus: uncharacterized protein (670 aa).

10 consecutive transmembrane segments (helical) span residues 23-42 (YALR…YYLN), 47-69 (YWAM…SKSL), 76-98 (LLGA…FFLL), 118-140 (VAYA…VNIT), 153-170 (VCEV…MMIL), 381-403 (QWDA…SAVA), 410-432 (SLLM…GLMV), 437-454 (LWQF…MQLL), 461-483 (FAAL…NPPV), and 493-510 (NLAK…FAIL).

It belongs to the aromatic acid exporter ArAE (TC 2.A.85) family.

Its subcellular location is the cell membrane. This is an uncharacterized protein from Escherichia coli (strain K12).